A 139-amino-acid polypeptide reads, in one-letter code: Cytochrome c-551 (139 aa).

The N-terminal stretch at 1 to 20 (MTRTLAVVLAMTFSAAPVFA) is a signal peptide. Positions 34, 37, 38, and 116 each coordinate heme c.

The protein belongs to the cytochrome c family. In terms of processing, binds 1 heme c group covalently per subunit.

In Roseobacter denitrificans (strain ATCC 33942 / OCh 114) (Erythrobacter sp. (strain OCh 114)), this protein is Cytochrome c-551.